The primary structure comprises 61 residues: Small ribosomal subunit protein uS14 (61 aa).

The Zn(2+) site is built by Cys24, Cys27, Cys40, and Cys43.

This sequence belongs to the universal ribosomal protein uS14 family. Zinc-binding uS14 subfamily. As to quaternary structure, part of the 30S ribosomal subunit. Contacts proteins S3 and S10. Requires Zn(2+) as cofactor.

Binds 16S rRNA, required for the assembly of 30S particles and may also be responsible for determining the conformation of the 16S rRNA at the A site. The polypeptide is Small ribosomal subunit protein uS14 (Borrelia hermsii (strain HS1 / DAH)).